The primary structure comprises 587 residues: ATF/CREB activator 2 (587 aa).

4 disordered regions span residues 1 to 62, 123 to 144, 169 to 195, and 381 to 423; these read MFTG…SRSL, LRQQ…EEES, NLSQ…SNIA, and TGGE…IPGT. The segment covering 16 to 29 has biased composition (basic and acidic residues); that stretch reads KQKDNNKRGIDDTS. Low complexity-rich tracts occupy residues 39-57 and 123-134; these read SVSD…NNSA and LRQQQQQDQRQQ. Phosphoserine is present on residues S171 and S179. Residues 385 to 395 show a composition bias toward basic and acidic residues; the sequence is NRGKSALRESH. The segment covering 396–418 has biased composition (polar residues); that stretch reads SNPSFTPKSQGSHLNLAANTQGN. Phosphoserine is present on S399. One can recognise a bZIP domain in the interval 425–488; that stretch reads AWKRARLLER…SKFKKFSKIH (64 aa). Residues 427-447 form a basic motif region; it reads KRARLLERNRIAASKCRQRKK. Residues 453 to 467 are leucine-zipper; it reads LQKEFNEIKDENRIL. Residues 552–587 form a disordered region; it reads SQRFGSDTDDDDIDLKPVEGGKDPDNQSLPNSEKIK. Residue S557 is modified to Phosphoserine. T559 carries the phosphothreonine modification. Over residues 565 to 576 the composition is skewed to basic and acidic residues; the sequence is DLKPVEGGKDPD. Over residues 577 to 587 the composition is skewed to polar residues; sequence NQSLPNSEKIK.

This sequence belongs to the bZIP family.

It localises to the nucleus. In terms of biological role, transcriptional activator of promoters containing ATF/CREB sites. Can independently stimulate transcription through ATF/CREB sites. Important for a variety of biological functions including growth on non-optimal carbon sources. The sequence is that of ATF/CREB activator 2 (CST6) from Saccharomyces cerevisiae (strain ATCC 204508 / S288c) (Baker's yeast).